The sequence spans 111 residues: MAPRTPLALFVSLNLLFFTYTSATTGTCPKNSIEIGTCVTVLNLVDLTLGNPPVKPCCSLIQGLADLEAAVCLCTAVKASILGIVNINLPINLSVLLNVCSRNAPKSFQCA.

A signal peptide spans 1 to 23 (MAPRTPLALFVSLNLLFFTYTSA). 3 cysteine pairs are disulfide-bonded: C28/C58, C38/C57, and C74/C110.

It belongs to the plant LTP family. PEARLI1 subfamily.

The protein localises to the secreted. The sequence is that of Putative lipid-binding protein AIR1 (AIR1) from Arabidopsis thaliana (Mouse-ear cress).